A 221-amino-acid chain; its full sequence is Protein UL40 (221 aa).

The HLA-E-binding epitope stretch occupies residues 15–23 (VMAPRTLIL).

This sequence belongs to the HHV-5 UL40 protein family.

In terms of biological role, plays a role in the protection against host NK-cell cytotoxicity by up-regulating the cell surface expression of HLA-E independent of TAP (HLA-E has an inhibitory effect on the cytotoxic activity of the NK cell). Also promotes cell surface expression of UL18, another viral protein involved in NK-cell evasion. This is Protein UL40 (UL40) from Homo sapiens (Human).